The sequence spans 862 residues: DNA topoisomerase 3-beta-1 (862 aa).

The region spanning 3–153 is the Toprim domain; sequence TVLMVAEKPS…EKTVFRARFS (151 aa). The 423-residue stretch at 171–593 folds into the Topo IA-type catalytic domain; it reads DHNEALSVDA…HTLDVFKRKF (423 aa). The O-(5'-phospho-DNA)-tyrosine intermediate role is filled by Tyr-336. Over residues 821–851 the composition is skewed to basic residues; it reads PMHRGGPGRRQGRGRGRARRPPGKPNPRRPK. Residues 821 to 854 form a disordered region; the sequence is PMHRGGPGRRQGRGRGRARRPPGKPNPRRPKDKM.

This sequence belongs to the type IA topoisomerase family. Isoform 1 is found in testis, heart and skeletal muscle. A 4 kb transcript which probably represents isoform 2 is found in thymus, kidney and pancreas.

It catalyses the reaction ATP-independent breakage of single-stranded DNA, followed by passage and rejoining.. Its function is as follows. Releases the supercoiling and torsional tension of DNA introduced during the DNA replication and transcription by transiently cleaving and rejoining one strand of the DNA duplex. Introduces a single-strand break via transesterification at a target site in duplex DNA. The scissile phosphodiester is attacked by the catalytic tyrosine of the enzyme, resulting in the formation of a DNA-(5'-phosphotyrosyl)-enzyme intermediate and the expulsion of a 3'-OH DNA strand. The free DNA strand than undergoes passage around the unbroken strand thus removing DNA supercoils. Finally, in the religation step, the DNA 3'-OH attacks the covalent intermediate to expel the active-site tyrosine and restore the DNA phosphodiester backbone. Possesses negatively supercoiled DNA relaxing activity. This chain is DNA topoisomerase 3-beta-1 (TOP3B), found in Homo sapiens (Human).